We begin with the raw amino-acid sequence, 309 residues long: S-antigen protein (309 aa).

An N-terminal signal peptide occupies residues 1-23; sequence MNRILSVSFYLFFLYLYIYKTYG. Residues 52–309 are disordered; it reads GKGNKYEDLQ…KSIMNMLILM (258 aa). The segment covering 60–86 has biased composition (acidic residues); sequence LQEEGEGENDDEEHSNSEESDNDEENE. The span at 93–259 shows a compositional bias: basic and acidic residues; it reads EAPKSDEAEA…DEAEARKSEA (167 aa). The 20 X 8 AA approximate tandem repeats of A-[RL]-K-S-D-E-A-E stretch occupies residues 97–256; the sequence is SDEAEALKSD…RKSDEAEARK (160 aa). Tandem repeats lie at residues 257-271 and 272-286. The segment at 257–286 is 2 X 15 AA tandem repeats of S-E-A-G-T-E-G-P-K-G-T-G-G-P-G; that stretch reads SEAGTEGPKGTGGPGSEAGTEGPKGTGGPG. Gly residues predominate over residues 263 to 289; the sequence is GPKGTGGPGSEAGTEGPKGTGGPGSGG.

The protein resides in the parasitophorous vacuole. In terms of biological role, s antigens are soluble heat-stable proteins present in the sera of some infected individuals. The protein is S-antigen protein of Plasmodium falciparum (isolate NF7 / Ghana).